We begin with the raw amino-acid sequence, 232 residues long: Ubiquinone biosynthesis O-methyltransferase (232 aa).

Residues arginine 36, glycine 55, aspartate 76, and methionine 120 each contribute to the S-adenosyl-L-methionine site.

Belongs to the methyltransferase superfamily. UbiG/COQ3 family.

The enzyme catalyses a 3-demethylubiquinol + S-adenosyl-L-methionine = a ubiquinol + S-adenosyl-L-homocysteine + H(+). It catalyses the reaction a 3-(all-trans-polyprenyl)benzene-1,2-diol + S-adenosyl-L-methionine = a 2-methoxy-6-(all-trans-polyprenyl)phenol + S-adenosyl-L-homocysteine + H(+). Its pathway is cofactor biosynthesis; ubiquinone biosynthesis. Functionally, O-methyltransferase that catalyzes the 2 O-methylation steps in the ubiquinone biosynthetic pathway. This Burkholderia cenocepacia (strain ATCC BAA-245 / DSM 16553 / LMG 16656 / NCTC 13227 / J2315 / CF5610) (Burkholderia cepacia (strain J2315)) protein is Ubiquinone biosynthesis O-methyltransferase.